Consider the following 301-residue polypeptide: Protoheme IX farnesyltransferase (301 aa).

Transmembrane regions (helical) follow at residues 16–36, 41–61, 93–113, 114–134, 141–161, 172–192, 217–237, 238–258, and 273–293; these read VVAL…PGIP, IQSG…AAAI, VFAG…VNLI, TAVL…VYLK, IVIG…AVTG, SLLV…LAIF, QILL…ATGM, SGVF…WYAW, and FGYS…DHWL.

It belongs to the UbiA prenyltransferase family. Protoheme IX farnesyltransferase subfamily.

Its subcellular location is the cell inner membrane. It carries out the reaction heme b + (2E,6E)-farnesyl diphosphate + H2O = Fe(II)-heme o + diphosphate. The protein operates within porphyrin-containing compound metabolism; heme O biosynthesis; heme O from protoheme: step 1/1. In terms of biological role, converts heme B (protoheme IX) to heme O by substitution of the vinyl group on carbon 2 of heme B porphyrin ring with a hydroxyethyl farnesyl side group. This is Protoheme IX farnesyltransferase from Xylella fastidiosa (strain 9a5c).